The sequence spans 378 residues: Biotin synthase, mitochondrial (378 aa).

The N-terminal 26 residues, 1 to 26 (MMLVRSVFRSQLRPSVSGGLQSASCY), are a transit peptide targeting the mitochondrion. A Radical SAM core domain is found at 79 to 308 (REVQQCTLLS…KAMVRLSAGR (230 aa)). [4Fe-4S] cluster-binding residues include Cys94, Cys98, and Cys101. [2Fe-2S] cluster-binding residues include Cys138, Cys171, Cys231, and Arg303. The segment at 357–378 (PPSFSEDDSESENCEKVASASH) is disordered.

Belongs to the radical SAM superfamily. Biotin synthase family. [4Fe-4S] cluster serves as cofactor. Requires [2Fe-2S] cluster as cofactor.

The protein resides in the mitochondrion. The enzyme catalyses (4R,5S)-dethiobiotin + (sulfur carrier)-SH + 2 reduced [2Fe-2S]-[ferredoxin] + 2 S-adenosyl-L-methionine = (sulfur carrier)-H + biotin + 2 5'-deoxyadenosine + 2 L-methionine + 2 oxidized [2Fe-2S]-[ferredoxin]. It functions in the pathway cofactor biosynthesis; biotin biosynthesis; biotin from 7,8-diaminononanoate: step 2/2. The polypeptide is Biotin synthase, mitochondrial (BIO2) (Arabidopsis thaliana (Mouse-ear cress)).